The sequence spans 408 residues: Argininosuccinate synthase (408 aa).

ATP contacts are provided by residues 8-16 and alanine 35; that span reads AYSGGLDTT. L-citrulline-binding residues include tyrosine 86 and serine 91. Glycine 116 contacts ATP. L-aspartate-binding residues include threonine 118, asparagine 122, and aspartate 123. L-citrulline is bound at residue asparagine 122. Residues arginine 126, serine 177, serine 186, glutamate 263, and tyrosine 275 each coordinate L-citrulline.

The protein belongs to the argininosuccinate synthase family. Type 1 subfamily. As to quaternary structure, homotetramer.

It localises to the cytoplasm. It catalyses the reaction L-citrulline + L-aspartate + ATP = 2-(N(omega)-L-arginino)succinate + AMP + diphosphate + H(+). The protein operates within amino-acid biosynthesis; L-arginine biosynthesis; L-arginine from L-ornithine and carbamoyl phosphate: step 2/3. The polypeptide is Argininosuccinate synthase (Lachnospira eligens (strain ATCC 27750 / DSM 3376 / VPI C15-48 / C15-B4) (Eubacterium eligens)).